Consider the following 124-residue polypeptide: Small ribosomal subunit protein uS12 (124 aa).

A disordered region spans residues 8-28; it reads IRSAREKTDKKTKSPALKSCP. The segment covering 10–19 has biased composition (basic and acidic residues); the sequence is SAREKTDKKT. Asp89 is subject to 3-methylthioaspartic acid.

Belongs to the universal ribosomal protein uS12 family. As to quaternary structure, part of the 30S ribosomal subunit. Contacts proteins S8 and S17. May interact with IF1 in the 30S initiation complex.

Functionally, with S4 and S5 plays an important role in translational accuracy. Its function is as follows. Interacts with and stabilizes bases of the 16S rRNA that are involved in tRNA selection in the A site and with the mRNA backbone. Located at the interface of the 30S and 50S subunits, it traverses the body of the 30S subunit contacting proteins on the other side and probably holding the rRNA structure together. The combined cluster of proteins S8, S12 and S17 appears to hold together the shoulder and platform of the 30S subunit. The sequence is that of Small ribosomal subunit protein uS12 from Arthrospira platensis (Spirulina platensis).